A 2345-amino-acid chain; its full sequence is Acetyl-CoA carboxylase 1 (2345 aa).

An N-acetylmethionine modification is found at M1. S5, S23, S25, S29, S34, S47, S49, and S52 each carry phosphoserine. Phosphothreonine is present on T57. S77 and S79 each carry phosphoserine. The residue at position 79 (S79) is a Phosphoserine; by AMPK. The region spanning V116–A617 is the Biotin carboxylation domain. The region spanning S274 to M465 is the ATP-grasp domain. A300–L357 serves as a coordination point for ATP. The Mg(2+) site is built by E423, E436, and N438. Mn(2+) contacts are provided by E423, E436, and N438. The active site involves R440. Position 609 is a phosphothreonine (T609). The Biotinyl-binding domain maps to F744–Q818. K785 carries the post-translational modification N6-biotinyllysine. Phosphoserine occurs at positions 834, 1200, 1215, and 1217. Residue T1226 is modified to Phosphothreonine. A phosphoserine mark is found at S1258, S1262, and S1272. N6-acetyllysine is present on K1333. The region spanning P1575–N1913 is the CoA carboxyltransferase N-terminal domain. Residues P1575–N2233 are carboxyltransferase. R1822, K2126, and R2128 together coordinate CoA. Residues P1917 to N2233 enclose the CoA carboxyltransferase C-terminal domain. Position 2152 is a phosphothreonine (T2152).

As to quaternary structure, monomer, homodimer, and homotetramer. Can form filamentous polymers. Interacts in its inactive phosphorylated form with the BRCT domains of BRCA1 which prevents ACACA dephosphorylation and inhibits lipid synthesis. Interacts with MID1IP1; interaction with MID1IP1 promotes oligomerization and increases its activity. Requires Mg(2+) as cofactor. The cofactor is Mn(2+). Biotin serves as cofactor. In terms of processing, phosphorylation on Ser-1262 is required for interaction with BRCA1. Phosphorylation at Ser-79 by AMPK inactivates enzyme activity. Post-translationally, the biotin cofactor is covalently attached to the central biotinyl-binding domain and is required for the catalytic activity.

The protein resides in the cytoplasm. It is found in the cytosol. It catalyses the reaction hydrogencarbonate + acetyl-CoA + ATP = malonyl-CoA + ADP + phosphate + H(+). It functions in the pathway lipid metabolism; malonyl-CoA biosynthesis; malonyl-CoA from acetyl-CoA: step 1/1. With respect to regulation, inhibited by phosphorylation. Citrate promotes oligomerization of the protein into filaments that correspond to the most active form of the carboxylase. In terms of biological role, cytosolic enzyme that catalyzes the carboxylation of acetyl-CoA to malonyl-CoA, the first and rate-limiting step of de novo fatty acid biosynthesis. This is a 2 steps reaction starting with the ATP-dependent carboxylation of the biotin carried by the biotin carboxyl carrier (BCC) domain followed by the transfer of the carboxyl group from carboxylated biotin to acetyl-CoA. The chain is Acetyl-CoA carboxylase 1 from Mus musculus (Mouse).